A 367-amino-acid polypeptide reads, in one-letter code: Carbamoyl phosphate synthase small chain (367 aa).

Residues 1-182 form a CPSase region; sequence MKLENKKGYL…PIFHPNTGDM (182 aa). Ser50, Gly230, and Gly232 together coordinate L-glutamine. A Glutamine amidotransferase type-1 domain is found at 182–367; it reads MIVVVDCGIK…DKFRTMVTGK (186 aa). Catalysis depends on Cys258, which acts as the Nucleophile. Leu259, Gln262, Asn300, Gly302, and Tyr303 together coordinate L-glutamine. Catalysis depends on residues His343 and Glu345.

The protein belongs to the CarA family. Composed of two chains; the small (or glutamine) chain promotes the hydrolysis of glutamine to ammonia, which is used by the large (or ammonia) chain to synthesize carbamoyl phosphate. Tetramer of heterodimers (alpha,beta)4.

The catalysed reaction is hydrogencarbonate + L-glutamine + 2 ATP + H2O = carbamoyl phosphate + L-glutamate + 2 ADP + phosphate + 2 H(+). It catalyses the reaction L-glutamine + H2O = L-glutamate + NH4(+). The protein operates within amino-acid biosynthesis; L-arginine biosynthesis; carbamoyl phosphate from bicarbonate: step 1/1. It participates in pyrimidine metabolism; UMP biosynthesis via de novo pathway; (S)-dihydroorotate from bicarbonate: step 1/3. Small subunit of the glutamine-dependent carbamoyl phosphate synthetase (CPSase). CPSase catalyzes the formation of carbamoyl phosphate from the ammonia moiety of glutamine, carbonate, and phosphate donated by ATP, constituting the first step of 2 biosynthetic pathways, one leading to arginine and/or urea and the other to pyrimidine nucleotides. The small subunit (glutamine amidotransferase) binds and cleaves glutamine to supply the large subunit with the substrate ammonia. The chain is Carbamoyl phosphate synthase small chain from Saccharolobus solfataricus (strain ATCC 35092 / DSM 1617 / JCM 11322 / P2) (Sulfolobus solfataricus).